A 502-amino-acid chain; its full sequence is Archaemetzincin-1 (502 aa).

Zn(2+) is bound at residue H262. The active-site Proton acceptor is the E263. Positions 266, 273, 278, 297, and 300 each coordinate Zn(2+). Positions 336-383 (GEPSVSEDTLPFSADSGMGCESDTEPVTSPSEPVTPDGWSHPFPDGPE) are disordered.

The protein belongs to the peptidase M54 family. Zn(2+) is required as a cofactor.

In terms of biological role, probable zinc metalloprotease. The protein is Archaemetzincin-1 (Amz1) of Mus musculus (Mouse).